The sequence spans 447 residues: Argininosuccinate synthase (447 aa).

ATP is bound by residues 17 to 25 (AFSGGLDTS) and Ala43. Position 99 (Tyr99) interacts with L-citrulline. Positions 129 and 131 each coordinate ATP. The L-aspartate site is built by Thr131, Asn135, and Asp136. Residue Asn135 coordinates L-citrulline. Asp136 contacts ATP. Residues Arg139 and Ser192 each contribute to the L-citrulline site. An ATP-binding site is contributed by Asp194. Positions 201, 203, and 280 each coordinate L-citrulline.

The protein belongs to the argininosuccinate synthase family. Type 2 subfamily. In terms of assembly, homotetramer.

The protein resides in the cytoplasm. It carries out the reaction L-citrulline + L-aspartate + ATP = 2-(N(omega)-L-arginino)succinate + AMP + diphosphate + H(+). It participates in amino-acid biosynthesis; L-arginine biosynthesis; L-arginine from L-ornithine and carbamoyl phosphate: step 2/3. This is Argininosuccinate synthase from Salmonella heidelberg (strain SL476).